We begin with the raw amino-acid sequence, 349 residues long: Autophagy-related protein 3 (349 aa).

Positions 95-173 (ALVNDGDDFK…IRDSGADSKN (79 aa)) are flexible region. The active-site Glycyl thioester intermediate is C244. Positions 248 to 325 (SVMKTLLDRA…DQEVAIRVDQ (78 aa)) are handle region. An ATG8 interaction motif (AIM) motif is present at residues 306 to 309 (WEEV).

Belongs to the ATG3 family. As to quaternary structure, monomer. Interacts with ATG8 through an intermediate thioester bond between Cys-244 and the C-terminal Gly of ATG8. Interacts with the C-terminal region of the E1-like ATG7 enzyme. Also interacts with the ATG12-ATG5 conjugate.

Its subcellular location is the cytoplasm. Functionally, E2 conjugating enzyme required for the cytoplasm to vacuole transport (Cvt) and autophagy. Required for selective autophagic degradation of the nucleus (nucleophagy) as well as for mitophagy which contributes to regulate mitochondrial quantity and quality by eliminating the mitochondria to a basal level to fulfill cellular energy requirements and preventing excess ROS production. Responsible for the E2-like covalent binding of phosphatidylethanolamine to the C-terminal Gly of ATG8. The ATG12-ATG5 conjugate plays a role of an E3 and promotes the transfer of ATG8 from ATG3 to phosphatidylethanolamine (PE). This step is required for the membrane association of ATG8. The formation of the ATG8-phosphatidylethanolamine conjugate is essential for autophagy and for the cytoplasm to vacuole transport (Cvt). The ATG8-PE conjugate mediates tethering between adjacent membranes and stimulates membrane hemifusion, leading to expansion of the autophagosomal membrane during autophagy. Autophagy is required for proper vegetative growth, asexual/sexual reproduction, and full virulence. Autophagy is particularly involved in the biosynthesis of deoxynivalenol (DON), an important virulence determinant. In Gibberella zeae (strain ATCC MYA-4620 / CBS 123657 / FGSC 9075 / NRRL 31084 / PH-1) (Wheat head blight fungus), this protein is Autophagy-related protein 3.